Here is a 396-residue protein sequence, read N- to C-terminus: Pyridinium-3,5-bisthiocarboxylic acid mononucleotide nickel insertion protein (396 aa).

Belongs to the LarC family.

The enzyme catalyses Ni(II)-pyridinium-3,5-bisthiocarboxylate mononucleotide = pyridinium-3,5-bisthiocarboxylate mononucleotide + Ni(2+). Its function is as follows. Involved in the biosynthesis of a nickel-pincer cofactor ((SCS)Ni(II) pincer complex). Binds Ni(2+), and functions in nickel delivery to pyridinium-3,5-bisthiocarboxylic acid mononucleotide (P2TMN), to form the mature cofactor. Is thus probably required for the activation of nickel-pincer cofactor-dependent enzymes. In Moorella thermoacetica (strain ATCC 39073 / JCM 9320), this protein is Pyridinium-3,5-bisthiocarboxylic acid mononucleotide nickel insertion protein.